The primary structure comprises 476 residues: Bifunctional protein HldE (476 aa).

Residues 1–319 (MKVSLPAFEK…EALALHHGES (319 aa)) are ribokinase. ATP is bound at residue 195–198 (NMSE). Residue Asp264 is part of the active site. The cytidylyltransferase stretch occupies residues 345–476 (MTNGCFDILH…AIIQNIMANQ (132 aa)).

The protein in the N-terminal section; belongs to the carbohydrate kinase PfkB family. This sequence in the C-terminal section; belongs to the cytidylyltransferase family. Homodimer.

The catalysed reaction is D-glycero-beta-D-manno-heptose 7-phosphate + ATP = D-glycero-beta-D-manno-heptose 1,7-bisphosphate + ADP + H(+). It carries out the reaction D-glycero-beta-D-manno-heptose 1-phosphate + ATP + H(+) = ADP-D-glycero-beta-D-manno-heptose + diphosphate. The protein operates within nucleotide-sugar biosynthesis; ADP-L-glycero-beta-D-manno-heptose biosynthesis; ADP-L-glycero-beta-D-manno-heptose from D-glycero-beta-D-manno-heptose 7-phosphate: step 1/4. It functions in the pathway nucleotide-sugar biosynthesis; ADP-L-glycero-beta-D-manno-heptose biosynthesis; ADP-L-glycero-beta-D-manno-heptose from D-glycero-beta-D-manno-heptose 7-phosphate: step 3/4. Its function is as follows. Catalyzes the phosphorylation of D-glycero-D-manno-heptose 7-phosphate at the C-1 position to selectively form D-glycero-beta-D-manno-heptose-1,7-bisphosphate. Catalyzes the ADP transfer from ATP to D-glycero-beta-D-manno-heptose 1-phosphate, yielding ADP-D-glycero-beta-D-manno-heptose. This Shewanella baltica (strain OS155 / ATCC BAA-1091) protein is Bifunctional protein HldE.